Consider the following 363-residue polypeptide: Fructose-bisphosphate aldolase C-B (363 aa).

Positions 56 and 147 each coordinate substrate. E188 (proton acceptor) is an active-site residue. Residue K230 is the Schiff-base intermediate with dihydroxyacetone-P of the active site.

This sequence belongs to the class I fructose-bisphosphate aldolase family. In terms of assembly, homotetramer.

It catalyses the reaction beta-D-fructose 1,6-bisphosphate = D-glyceraldehyde 3-phosphate + dihydroxyacetone phosphate. It participates in carbohydrate degradation; glycolysis; D-glyceraldehyde 3-phosphate and glycerone phosphate from D-glucose: step 4/4. This chain is Fructose-bisphosphate aldolase C-B (aldocb), found in Danio rerio (Zebrafish).